We begin with the raw amino-acid sequence, 510 residues long: Secreted RxLR effector protein 108 (510 aa).

The N-terminal stretch at 1–20 (MRGAYYVLTALFVVTSSDIA) is a signal peptide. An N-linked (GlcNAc...) asparagine glycan is attached at Asn47. The short motif at 48–65 (RSLRGSRDGRNDLANEER) is the RxLR-dEER element. 2 disordered regions span residues 111–139 (RAAKAVEEKSRPAKAAKKTPRAAKAAKKT) and 386–442 (KRSR…DDPK). Positions 122 to 137 (PAKAAKKTPRAAKAAK) are enriched in basic residues. The segment covering 393–405 (DGNTDTASLPSKQ) has biased composition (polar residues). A compositionally biased stretch (basic and acidic residues) spans 429–442 (VPTKEIKSSFDDPK).

It belongs to the RxLR effector family.

It localises to the secreted. Its subcellular location is the host nucleus. Secreted effector that completely suppresses the host cell death induced by cell death-inducing proteins. This is Secreted RxLR effector protein 108 from Plasmopara viticola (Downy mildew of grapevine).